A 159-amino-acid chain; its full sequence is Ribosomal RNA large subunit methyltransferase H (159 aa).

Residues Leu76 and Gly108 each contribute to the S-adenosyl-L-methionine site.

This sequence belongs to the RNA methyltransferase RlmH family. As to quaternary structure, homodimer.

It localises to the cytoplasm. It carries out the reaction pseudouridine(1915) in 23S rRNA + S-adenosyl-L-methionine = N(3)-methylpseudouridine(1915) in 23S rRNA + S-adenosyl-L-homocysteine + H(+). Its function is as follows. Specifically methylates the pseudouridine at position 1915 (m3Psi1915) in 23S rRNA. This is Ribosomal RNA large subunit methyltransferase H from Levilactobacillus brevis (strain ATCC 367 / BCRC 12310 / CIP 105137 / JCM 1170 / LMG 11437 / NCIMB 947 / NCTC 947) (Lactobacillus brevis).